A 287-amino-acid polypeptide reads, in one-letter code: Inactive phospholipid phosphatase 7 (287 aa).

Residues 1-75 (MPANQTRSRA…NNKDKKELPE (75 aa)) are disordered. Residues 1–120 (MPANQTRSRA…SSSWGSVRSM (120 aa)) are Cytoplasmic-facing. Residues 31–40 (SGGGGGGGES) show a composition bias toward gly residues. Over residues 49 to 65 (QRQQQNQQQQGDNPQPE) the composition is skewed to low complexity. Residues 121-141 (VKLLALTGHGIPWVFGTIVCL) traverse the membrane as a helical segment. Residues 142 to 146 (MRSNT) are Extracellular-facing. The helical transmembrane segment at 147-167 (LAGQEVLVNLLLALLLDVMTV) threads the bilayer. Residues 168-215 (SGMQKLVKRKGPWEMPPGFFDYLAMDIYSFPAAHASRAVMVSKFLLAH) are Cytoplasmic-facing. The chain crosses the membrane as a helical span at residues 216 to 236 (LVLAVPLRILLVLWAILVGIS). At 237-247 (RVLLGRHHLTD) the chain is on the extracellular side. The chain crosses the membrane as a helical span at residues 248 to 268 (VGCGFALGFLHYSLVEMVWLS). Residues 269-287 (SNTCQTLISIGTFNWSPLY) are Cytoplasmic-facing.

The protein belongs to the PA-phosphatase related phosphoesterase family.

It localises to the nucleus envelope. Its subcellular location is the endoplasmic reticulum membrane. The protein resides in the membrane. In terms of biological role, plays a role as negative regulator of myoblast differentiation, in part through effects on MTOR signaling. Has no detectable enzymatic activity. In Danio rerio (Zebrafish), this protein is Inactive phospholipid phosphatase 7.